A 580-amino-acid chain; its full sequence is Phosphatase and actin regulator 1 (580 aa).

A phosphoserine mark is found at Ser-67 and Ser-78. Thr-104 is modified (phosphothreonine). Positions 108–129 (RRRSKFANLGRIFKPWKWRKKK) match the Nuclear localization signal motif. The stretch at 138 to 163 (AALERKISMRQSREELIKRGVLKEIY) is one RPEL 1 repeat. 2 disordered regions span residues 330-350 (SEQRVPCSTSYHSSGLHSSDG) and 374-408 (DNKENVPHEPDYEDSPCLYGREEEEEEEDEDDDAS). Residues 337–348 (STSYHSSGLHSS) are compositionally biased toward low complexity. Over residues 374–383 (DNKENVPHEP) the composition is skewed to basic and acidic residues. Acidic residues predominate over residues 395 to 407 (EEEEEEEDEDDDA). RPEL repeat units lie at residues 422–447 (DSLAIKLSNRPSKRELEEKNILPRQT), 460–485 (TKLTRRLSQRPTAEELEQRNILKPRN), and 498–523 (RRLTRKLSQRPTVEELRERKILIRFS). The interval 463-494 (TRRLSQRPTAEELEQRNILKPRNEQEEQEEKR) is disordered. Position 467 is a phosphoserine (Ser-467). The segment covering 471-494 (TAEELEQRNILKPRNEQEEQEEKR) has biased composition (basic and acidic residues). At Ser-505 the chain carries Phosphoserine.

It belongs to the phosphatase and actin regulator family. In terms of assembly, interacts (via RPEL repeats) with ACTA1 and PPP1CA; ACTA1 and PPP1CA compete for the same binding site.

The protein localises to the cytoplasm. It is found in the synapse. The protein resides in the nucleus. Its function is as follows. Binds actin monomers (G actin) and plays a role in multiple processes including the regulation of actin cytoskeleton dynamics, actin stress fibers formation, cell motility and survival, formation of tubules by endothelial cells, and regulation of PPP1CA activity. Involved in the regulation of cortical neuron migration and dendrite arborization. The protein is Phosphatase and actin regulator 1 (Phactr1) of Mus musculus (Mouse).